The chain runs to 352 residues: Endophilin-A1 (352 aa).

The interval 1-21 (MSVAGLKKQFHKATQKVSEKV) is membrane-binding amphipathic helix. Residues 1–27 (MSVAGLKKQFHKATQKVSEKVGGAEGT) are disordered. Residues 1 to 125 (MSVAGLKKQF…EVGEAMRELS (125 aa)) form a binds and tubulates liposomes region. The BAR domain occupies 18-249 (SEKVGGAEGT…LEERIRQASS (232 aa)). The interval 60–87 (PNPASRAKLSMINTMSKIRGQEKGPGYP) is required for dimerization upon membrane association. The stretch at 181 to 248 (EELRQALEKF…RLEERIRQAS (68 aa)) forms a coiled coil. A compositionally biased stretch (basic and acidic residues) spans 245 to 257 (RQASSQPRREYQP). The tract at residues 245-289 (RQASSQPRREYQPKPRMSLEFPTGDSTQPNGGLSHTGTPKPSGVQ) is disordered. Serine 262 is subject to Phosphoserine. Positions 268–283 (GDSTQPNGGLSHTGTP) are enriched in polar residues. The SH3 domain occupies 290–349 (MDQPCCRALYDFEPENEGELGFKEGDIITLTNQIDENWYEGMLHGHSGFFPINYVEILVA). Tyrosine 299 carries the phosphotyrosine modification.

It belongs to the endophilin family. In terms of assembly, monomer; in cytoplasm. Homodimer; when associated with membranes. Interacts with OPHN1. Interacts with SYNJ1. Interacts with DNM1. Interacts with MAP4K3; the interaction appears to regulate MAP4K3-mediated JNK activation. Interacts with PDCD6IP. Interacts with ATXN2. Interacts with ADAM9 and ADAM15 cytoplasmic tails. Interacts with BIN2. Interacts with TMEM108. Interacts with ADGRB2. As to expression, brain, mostly in frontal cortex. Expressed at high level in fetal cerebellum.

The protein resides in the cytoplasm. It is found in the membrane. The protein localises to the early endosome. It localises to the presynapse. Implicated in synaptic vesicle endocytosis. May recruit other proteins to membranes with high curvature. Required for BDNF-dependent dendrite outgrowth. Cooperates with SH3GL2 to mediate BDNF-NTRK2 early endocytic trafficking and signaling from early endosomes. In Homo sapiens (Human), this protein is Endophilin-A1 (SH3GL2).